A 120-amino-acid chain; its full sequence is GATA transcription factor 23 (120 aa).

The GATA-type zinc finger occupies 22–76 (KGTIRCCSECKTTKTPMWRGGPTGPKSLCNACGIRHRKQRRSELLGIHIIRSHKS).

This sequence belongs to the type IV zinc-finger family. Class B subfamily.

The protein resides in the nucleus. Its function is as follows. Transcriptional regulator that specifically binds 5'-GATA-3' or 5'-GAT-3' motifs within gene promoters. The chain is GATA transcription factor 23 (GATA23) from Arabidopsis thaliana (Mouse-ear cress).